The chain runs to 33 residues: Neutrophil defensin 1 (33 aa).

3 disulfide bridges follow: Cys3–Cys31, Cys5–Cys20, and Cys10–Cys30.

This sequence belongs to the alpha-defensin family.

The protein resides in the secreted. Functionally, anti-fungal and bactericidal activity, greater against Gram-positive bacteria. The chain is Neutrophil defensin 1 from Mesocricetus auratus (Golden hamster).